Reading from the N-terminus, the 398-residue chain is MKILVINCGSSSLKYQVFNMENEDVLAKGAIERIGIEGSFLKHEPAGGEEVKIEKDVTDHKAAFKMVVDAITDEGHGVLKDLKEIEAVGHRVVHGGEEFSGSVIIDDDVMNALESCINLAPLHNPPNIYGIEASKANMPGVPQVGVFDTAFHQTMPKKAYLYGIPYEYYEKHSVRRYGFHGTSHKYVASRAADMLGKPLEDLKLITCHLGNGASVAAINKGESVDTSMGLTPLEGLVMGTRSGSMDPSIIKFLMDKEGLSIDEVDNILNKKSGVLGLSGLSNDFRDLEEAAAEGNERAENTLEVFYYTVSKYIGSYLAALNGADAIIFTAGLGENSPSVREAVTENLSYAGIKVDKDKNQVRGKETDISTDDASTRVLVVPTNEELMIAREAKGLLGK.

Position 7 (Asn-7) interacts with Mg(2+). An ATP-binding site is contributed by Lys-14. Arg-91 serves as a coordination point for substrate. Asp-148 functions as the Proton donor/acceptor in the catalytic mechanism. ATP-binding positions include 208–212, 283–285, and 331–335; these read HLGNG, DFR, and GLGEN. Glu-384 is a Mg(2+) binding site.

Belongs to the acetokinase family. As to quaternary structure, homodimer. It depends on Mg(2+) as a cofactor. Requires Mn(2+) as cofactor.

It is found in the cytoplasm. The enzyme catalyses acetate + ATP = acetyl phosphate + ADP. Its pathway is metabolic intermediate biosynthesis; acetyl-CoA biosynthesis; acetyl-CoA from acetate: step 1/2. Functionally, catalyzes the formation of acetyl phosphate from acetate and ATP. Can also catalyze the reverse reaction. The protein is Acetate kinase of Natranaerobius thermophilus (strain ATCC BAA-1301 / DSM 18059 / JW/NM-WN-LF).